The chain runs to 623 residues: MNDLKFDPNVKLILASARSHAMSLSHGQVTPLHLGVTLISDLTSVFYRAITSAGDGDISAQSVVNVINQSLYKLTKRNLGDTKVGVAVLVISLLEDSQISDVLKEAGVVPEKVKSEVEKLRGEVILRALKTYGTDLVEQAGKLDPVIGRHREIRRVIEVLSRRTKNNPVLIGEPGVGKTAVVEGLAQRILKGDVPINLTGVKLISLEFGAMVAGTTLRGQFEERLKSVLKAVEEAQGKVVLFIDEIHMALGACKASGSTDAAKLLKPMLARGQLRFIGATTLEEYRTHVEKDAAFERRFQQVFVAEPSVPDTISILRGLKEKYEGHHGVRIQDRALVLSAQLSERYITGRRLPDKAIDLVDESCAHVKAQLDIQPEEIDSLERKVMQLEIEIHALEKEKDDKASEARLSEVRKELDDLRDKLEPLTIKYKKEKKIINETRRLKQNRDDLMIALQEAERQHDVPKAAVLKYGAIQEVESAIAKLEKSAKDNVMLTETVGPENIAEVVSRWTGIPVTRLDQNEKKRLISLADKLHERVVGQDEAVKAVAAAILRSRVGLGRPQQPSGSFLFLGPTGVGKTELAKALAEQLFDSENLLVRLDMSEYNDKFSVNKLIGAPPGYVHWS.

Residues 1-123 (MNDLKFDPNV…KSEVEKLRGE (123 aa)) form the Clp R domain. 2 repeat regions span residues 6 to 71 (FDPN…NQSL) and 77 to 123 (RNLG…LRGE). An i region spans residues 129 to 375 (LKTYGTDLVE…HVKAQLDIQP (247 aa)). Residue 172 to 179 (GEPGVGKT) coordinates ATP. Residues 368–462 (KAQLDIQPEE…LQEAERQHDV (95 aa)) adopt a coiled-coil conformation. 571-578 (GPTGVGKT) lines the ATP pocket.

It belongs to the ClpA/ClpB family.

The protein is Putative chaperone protein ClpB2, chloroplastic (CLPB2) of Arabidopsis thaliana (Mouse-ear cress).